A 323-amino-acid chain; its full sequence is Acetyl-coenzyme A carboxylase carboxyl transferase subunit alpha (323 aa).

Positions 40-293 constitute a CoA carboxyltransferase C-terminal domain; it reads LAEKSLQLTK…RKALAESLKT (254 aa).

The protein belongs to the AccA family. As to quaternary structure, acetyl-CoA carboxylase is a heterohexamer composed of biotin carboxyl carrier protein (AccB), biotin carboxylase (AccC) and two subunits each of ACCase subunit alpha (AccA) and ACCase subunit beta (AccD).

It localises to the cytoplasm. It catalyses the reaction N(6)-carboxybiotinyl-L-lysyl-[protein] + acetyl-CoA = N(6)-biotinyl-L-lysyl-[protein] + malonyl-CoA. Its pathway is lipid metabolism; malonyl-CoA biosynthesis; malonyl-CoA from acetyl-CoA: step 1/1. Its function is as follows. Component of the acetyl coenzyme A carboxylase (ACC) complex. First, biotin carboxylase catalyzes the carboxylation of biotin on its carrier protein (BCCP) and then the CO(2) group is transferred by the carboxyltransferase to acetyl-CoA to form malonyl-CoA. The protein is Acetyl-coenzyme A carboxylase carboxyl transferase subunit alpha of Polynucleobacter necessarius subsp. necessarius (strain STIR1).